The following is a 72-amino-acid chain: SPbeta prophage-derived uncharacterized protein YorV (72 aa).

The chain is SPbeta prophage-derived uncharacterized protein YorV (yorV) from Bacillus subtilis (strain 168).